A 504-amino-acid chain; its full sequence is Deoxyguanosinetriphosphate triphosphohydrolase (504 aa).

The HD domain occupies 66-273; the sequence is RLTHSMEVQQ…MEAADDISYC (208 aa).

It belongs to the dGTPase family. Type 1 subfamily. In terms of assembly, homotetramer. It depends on Mg(2+) as a cofactor.

The enzyme catalyses dGTP + H2O = 2'-deoxyguanosine + triphosphate + H(+). In terms of biological role, dGTPase preferentially hydrolyzes dGTP over the other canonical NTPs. This chain is Deoxyguanosinetriphosphate triphosphohydrolase, found in Citrobacter koseri (strain ATCC BAA-895 / CDC 4225-83 / SGSC4696).